A 604-amino-acid polypeptide reads, in one-letter code: 3-hydroxy-3-methylglutaryl-coenzyme A reductase 2 (604 aa).

2 helical membrane-spanning segments follow: residues 47–67 (LPLY…MYFL) and 91–111 (AIVS…IGFV). The linker stretch occupies residues 112 to 188 (QTFVARGNND…APLVTPAASE (77 aa)). A glycan (N-linked (GlcNAc...) asparagine) is linked at N120. The catalytic stretch occupies residues 189–604 (EDEEIIKSVV…STKDVTKASS (416 aa)). E283 (charge relay system) is an active-site residue. N347 is a glycosylation site (N-linked (GlcNAc...) asparagine). K415 (charge relay system) is an active-site residue. The N-linked (GlcNAc...) asparagine glycan is linked to N460. Residue D491 is the Charge relay system of the active site. Residue H589 is the Proton donor of the active site. The N-linked (GlcNAc...) asparagine glycan is linked to N593.

It belongs to the HMG-CoA reductase family.

The protein localises to the endoplasmic reticulum membrane. It catalyses the reaction (R)-mevalonate + 2 NADP(+) + CoA = (3S)-3-hydroxy-3-methylglutaryl-CoA + 2 NADPH + 2 H(+). It functions in the pathway metabolic intermediate biosynthesis; (R)-mevalonate biosynthesis; (R)-mevalonate from acetyl-CoA: step 3/3. Its function is as follows. Catalyzes the synthesis of mevalonate. The specific precursor of all isoprenoid compounds present in plants. This is 3-hydroxy-3-methylglutaryl-coenzyme A reductase 2 (HMGR2) from Capsicum annuum (Capsicum pepper).